Here is a 347-residue protein sequence, read N- to C-terminus: Membrane progestin receptor gamma-B (347 aa).

Residues 1-52 (MLSLIKLQRVFNVHQVPKAFHEDGIISGYRHPRSSATECVWSLFQLTNETLN) lie on the Cytoplasmic side of the membrane. Residues 53–73 (VWTHFLPTWYFLWKLMTVLLM) form a helical membrane-spanning segment. At 74-81 (EDVWNEAY) the chain is on the extracellular side. A helical transmembrane segment spans residues 82–102 (TWPLLVFLFSCCVYPLASSCA). Residues 103-114 (HTFSSMSTRARH) are Cytoplasmic-facing. A helical membrane pass occupies residues 115-135 (ICYFFDYGALSFYSLGSAISY). Topologically, residues 136 to 138 (SAY) are extracellular. A helical membrane pass occupies residues 139–159 (VFPDAWLSSSFHAYYISVAVF). Residues 160 to 201 (NTVLSTSLACYSRLGLPLLHYSHDIVERFSERQCPRMSKVLR) lie on the Cytoplasmic side of the membrane. A helical transmembrane segment spans residues 202 to 222 (ILAFAYPYLFDNIPLFYRLFV). Residues 223–235 (CVGEGCTDNEANS) lie on the Extracellular side of the membrane. Residues 236-256 (VHVQHTLLAFLTSFLFATHLP) form a helical membrane-spanning segment. Residues 257–314 (ERLAPGRFDYIGHSHQLFHVCAIIGTHFQMKAIEMDMGLRRSQLLASAPAISFNNTIG) are Cytoplasmic-facing. A helical transmembrane segment spans residues 315 to 335 (AALLCVSVSLGIICVYSLPLL). At 336–347 (YSSNPKNTANKE) the chain is on the extracellular side.

It belongs to the ADIPOR family.

Its subcellular location is the membrane. In terms of biological role, steroid membrane receptor. Binds progesterone. May be involved in oocyte maturation. This Danio rerio (Zebrafish) protein is Membrane progestin receptor gamma-B.